The sequence spans 156 residues: Small ribosomal subunit protein uS7 (156 aa).

Belongs to the universal ribosomal protein uS7 family. As to quaternary structure, part of the 30S ribosomal subunit. Contacts proteins S9 and S11.

In terms of biological role, one of the primary rRNA binding proteins, it binds directly to 16S rRNA where it nucleates assembly of the head domain of the 30S subunit. Is located at the subunit interface close to the decoding center, probably blocks exit of the E-site tRNA. The protein is Small ribosomal subunit protein uS7 of Chromobacterium violaceum (strain ATCC 12472 / DSM 30191 / JCM 1249 / CCUG 213 / NBRC 12614 / NCIMB 9131 / NCTC 9757 / MK).